Reading from the N-terminus, the 313-residue chain is Methylenetetrahydrofolate dehydrogenase [NAD(+)] (313 aa).

Cys-152 is an active-site residue. NAD(+)-binding positions include Arg-187 to Ser-188, Asp-210 to Ile-211, and Phe-270 to Gly-272.

Belongs to the tetrahydrofolate dehydrogenase/cyclohydrolase family. As to quaternary structure, homodimer.

It carries out the reaction (6R)-5,10-methylene-5,6,7,8-tetrahydrofolate + NAD(+) = (6R)-5,10-methenyltetrahydrofolate + NADH. It functions in the pathway one-carbon metabolism; tetrahydrofolate interconversion. Catalyzes oxidation of cytoplasmic one-carbon units for purine biosynthesis. In Dictyostelium discoideum (Social amoeba), this protein is Methylenetetrahydrofolate dehydrogenase [NAD(+)] (thfA).